A 947-amino-acid polypeptide reads, in one-letter code: Bromodomain testis-specific protein (947 aa).

The 107-residue stretch at 27–133 (RLTNQLQYLQ…KLFVQKLSQM (107 aa)) folds into the Bromo 1 domain. Ser-187 is subject to Phosphoserine. Residues 209–220 (KGVKRKADTTTP) carry the Nuclear localization signal motif. The Bromo 2 domain occupies 267–376 (VKVTEQLRHC…DVFETHFSKI (110 aa)). 4 disordered regions span residues 395-421 (ETTG…ERVQ), 444-512 (PFRK…PMNY), 610-690 (NNQL…VKKM), and 849-873 (HLEQ…GLTV). Over residues 403–413 (NEASSEGNSSG) the composition is skewed to low complexity. Positions 417-470 (DERVQRLAKLQEQLKAVHQQLQVLSQVPFRKLNKKKEKSKKEKKKEKVNNSNEN) form a coiled coil. Residues 447 to 462 (KLNKKKEKSKKEKKKE) show a composition bias toward basic residues. Basic and acidic residues predominate over residues 470 to 481 (NPRKMCEQMRLK). Over residues 482-494 (EKSKRNQPKKRKQ) the composition is skewed to basic residues. Positions 500-582 (KSEDEDNAKP…ACLRKRPLKP (83 aa)) constitute an NET domain. Residues 631–668 (VGSVSRLSESSSSSSSSSESESSSSDLSSSDSSGSESE) show a composition bias toward low complexity. 2 stretches are compositionally biased toward basic and acidic residues: residues 674 to 690 (TEVK…VKKM) and 849 to 865 (HLEQ…ENQR).

The protein belongs to the BET family. Interacts with SMARCE1. Interacts with mRNA splicing machinery proteins SRSF2, DDX5, HNRNPK and TARDBP. Interacts with the acetylated N-terminus of histone H1, H2, H3 and H4. Interacts with P-TEFb components CDK9 and CCNT1/cyclin-T1. Post-translationally, ubiquitinated in a SPOP-dependent manner, leading to proteasomal degradation.

Its subcellular location is the nucleus. In terms of biological role, testis-specific chromatin protein that specifically binds histone H4 acetylated at 'Lys-5' and 'Lys-8' (H4K5ac and H4K8ac, respectively) and plays a key role in spermatogenesis. Required in late pachytene spermatocytes: plays a role in meiotic and post-meiotic cells by binding to acetylated histones at the promoter of specific meiotic and post-meiotic genes, facilitating their activation at the appropriate time. In the post-meiotic phase of spermatogenesis, binds to hyperacetylated histones and participates in their general removal from DNA. Also recognizes and binds a subset of butyrylated histones: able to bind histone H4 butyrylated at 'Lys-8' (H4K8ac), while it is not able to bind H4 butyrylated at 'Lys-5' (H4K5ac). Also acts as a component of the splicing machinery in pachytene spermatocytes and round spermatids and participates in 3'-UTR truncation of specific mRNAs in post-meiotic spermatids. Required for chromocenter organization, a structure comprised of peri-centromeric heterochromatin. The sequence is that of Bromodomain testis-specific protein (BRDT) from Macaca fascicularis (Crab-eating macaque).